A 101-amino-acid chain; its full sequence is uncharacterized protein (101 aa).

The segment covering 1–12 has biased composition (basic residues); that stretch reads MAAFQHRAKRSK. Disordered regions lie at residues 1 to 30 and 65 to 87; these read MAAF…KKRA and AQDQ…NVDK. Low complexity predominate over residues 65–78; sequence AQDQRSDAQAQQQR.

This is an uncharacterized protein from Eremothecium gossypii (strain ATCC 10895 / CBS 109.51 / FGSC 9923 / NRRL Y-1056) (Yeast).